Reading from the N-terminus, the 570-residue chain is MGSSGGPLYIGFDLSTQQLKGLVVSSDLKVVHIAKFDFDSDSKGFNISKGVLTNEDEGEVFAPVAMWLQALDAVLQDLKHQGLDFSLVRGISGAGQQHGSVYWNESAEEILGGLDGGKTLEDQLQQALSYPYSPNWQDSSTQRECDEFDAFLGSEEELARVTGSKAHHILRFQRKHPDAYRKTSRISLVSSFLASIFLGSVAPFDISDVCGMNLWDMPMNRWNERLLKLCAGEAGPEELKKKLGDVPHDGGQELGKISSYFAKRYSFHPDCAITPSTGDNPATILALPLRPLDAMVSLGTSTTFLMSTPQYKPDPSTHFFNHPTTPGLYMFMLCYKNGGLAREQVRDAINATSGEKTDPSNPWSNFDRVLLETPPGGQKAGSGPMKMGLFFPRPEIVPNLGEGEWHFNYTPGQANEELKETDEGWTHPRDDARAIVESQFLSLRLRSKELVHSPSGGVPPQPRRIYLVGGGSRNAAIAKVAGEVLGGIEGVYKLDVGENACALGAAYKAVWALERAPDQTFEDLIGRRWREDEFVEKIADGFQPDIFEKYRQAVQGFEKMEKQVLMEAKQ.

Substrate-binding residues include His98, Asp279, and Asn280. Residues Trp363, 470–471, and Asn474 contribute to the ATP site; that span reads GG.

The protein belongs to the FGGY kinase family.

The protein localises to the cytoplasm. It catalyses the reaction D-xylulose + ATP = D-xylulose 5-phosphate + ADP + H(+). Its function is as follows. Highly specific D-xylulose kinase which participates in the catabolism of xylose. Xylose is a major component of hemicelluloses such as xylan. Most fungi utilize D-xylose via three enzymatic reactions, xylose reductase (XR), xylitol dehydrogenase (XDH), and xylulokinase, to form xylulose 5-phosphate, which enters pentose phosphate pathway. The protein is Probable D-xylulose kinase A (xkiA) of Arthroderma otae (strain ATCC MYA-4605 / CBS 113480) (Microsporum canis).